We begin with the raw amino-acid sequence, 138 residues long: uncharacterized protein (138 aa).

Residues 1-27 (MEGELIENNGLDIYDTSETPKKRGRPA) are disordered.

This is an uncharacterized protein from Escherichia coli (strain K12).